A 490-amino-acid chain; its full sequence is Cytochrome P450 monooxygenase aclL (490 aa).

The helical transmembrane segment at 1–21 (MLFSLGPLTIVYGLVIFVVAK) threads the bilayer. N-linked (GlcNAc...) asparagine glycosylation is present at asparagine 176. Cysteine 434 contributes to the heme binding site.

It belongs to the cytochrome P450 family. Heme serves as cofactor.

It is found in the membrane. It functions in the pathway mycotoxin biosynthesis. Its function is as follows. Cytochrome P450 monooxygenase; part of the gene cluster that mediates the biosynthesis of aspirochlorine (or antibiotic A30641), an unusual halogenated spiro compound with distinctive antifungal properties due to selective inhibition of protein biosynthesis, and which is also active against bacteria, viruses, and murine tumor cells. The non-ribosomal peptide synthetase (NRPS) aclP is responsible the formation of the diketopiperazine (DKP) core from the condensation of 2 phenylalanine residues. One Phe residue is tailored into chlorotyrosine by hydroxylation and chlorination, whereas the second Phe undergoes an unprecedented C-C bond cleavage to be converted into glycine. After formation of the DKP, sulfur is incorporated into the DKP by conjugation with glutathione by aclG, followed by its stepwise degradation to the thiol by aclI, aclJ and aclK, and the dithiol oxidation by aclT. In addition, oxygenases (aclB, aclC, aclL and aclO) and O-methyltransferases (aclM and aclU) act as tailoring enzymes to produce the intermediate dechloroaspirochlorine. Ultimately, chlorination of dechloroaspirochlorine by the halogenase aclH is the last step in the aspirochlorine pathway. This chain is Cytochrome P450 monooxygenase aclL, found in Aspergillus oryzae (strain ATCC 42149 / RIB 40) (Yellow koji mold).